Consider the following 442-residue polypeptide: MENAKMNSLIAQYPLVEDLVALKETTWFNPGTTSLAEGLPYVGLTEQDVQDAHARLSRFAPYLAKAFPETAAAGGIIESELVAIPAMQKRLEKEYHQPIAGQLLLKKDSHLPISGSIKARGGIYEVLAHAEKLALEAGLLTLEDDYSKLLSPEFKQFFSQYSIAVGSTGNLGLSIGIMSARIGFKVTVHMSADARAWKKAKLRSHGVTVVEYEQDYGVAVEEGRKAAQSDPNCFFIDDENSRTLFLGYSVAGQRLKAQFAQQGRIVNADNPLFVYLPCGVGGGPGGVAFGLKLAFGDHVHCFFAEPTHSPCMLLGVHTGLHDQISVQDIGIDNLTAADGLAVGRASGFVGRAMERLLDGFYTLSDQTMYDMLSWLAQEEGIRLEPSALAGMAGPQRVCASVSYQQMHGFSAEQLRNATHLVWATGGGMVPEEEMNQYLAKGR.

Lys-118 is modified (N6-(pyridoxal phosphate)lysine).

The protein belongs to the serine/threonine dehydratase family. DsdA subfamily. In terms of assembly, monomer. Pyridoxal 5'-phosphate is required as a cofactor.

The catalysed reaction is D-serine = pyruvate + NH4(+). This Escherichia coli (strain UTI89 / UPEC) protein is D-serine dehydratase 1.